The chain runs to 135 residues: Large ribosomal subunit protein uL22 (135 aa).

Residues 112–135 (KKPEKKKLKAKSAKTEEAPKAAEV) form a disordered region. The span at 124–135 (AKTEEAPKAAEV) shows a compositional bias: basic and acidic residues.

The protein belongs to the universal ribosomal protein uL22 family. As to quaternary structure, part of the 50S ribosomal subunit.

This protein binds specifically to 23S rRNA; its binding is stimulated by other ribosomal proteins, e.g. L4, L17, and L20. It is important during the early stages of 50S assembly. It makes multiple contacts with different domains of the 23S rRNA in the assembled 50S subunit and ribosome. Functionally, the globular domain of the protein is located near the polypeptide exit tunnel on the outside of the subunit, while an extended beta-hairpin is found that lines the wall of the exit tunnel in the center of the 70S ribosome. The protein is Large ribosomal subunit protein uL22 of Brachyspira hyodysenteriae (strain ATCC 49526 / WA1).